A 509-amino-acid polypeptide reads, in one-letter code: 2,3-bisphosphoglycerate-independent phosphoglycerate mutase (509 aa).

Residues aspartate 12 and serine 62 each coordinate Mn(2+). The active-site Phosphoserine intermediate is serine 62. Residues histidine 123, 153–154 (RD), arginine 185, arginine 191, 260–263 (RPDR), and lysine 333 each bind substrate. Aspartate 400, histidine 404, aspartate 441, histidine 442, and histidine 460 together coordinate Mn(2+).

This sequence belongs to the BPG-independent phosphoglycerate mutase family. Monomer. Mn(2+) serves as cofactor.

The catalysed reaction is (2R)-2-phosphoglycerate = (2R)-3-phosphoglycerate. The protein operates within carbohydrate degradation; glycolysis; pyruvate from D-glyceraldehyde 3-phosphate: step 3/5. Catalyzes the interconversion of 2-phosphoglycerate and 3-phosphoglycerate. In Clostridium botulinum (strain Langeland / NCTC 10281 / Type F), this protein is 2,3-bisphosphoglycerate-independent phosphoglycerate mutase.